The primary structure comprises 147 residues: Cytochrome c-type biogenesis protein CcmE (147 aa).

Residues 1 to 7 (MTRKQKR) lie on the Cytoplasmic side of the membrane. A helical; Signal-anchor for type II membrane protein membrane pass occupies residues 8-28 (LSVIVGGLAFLGAATGLTFYA). Over 29–147 (LGQKASYFYM…KGVWQESKSE (119 aa)) the chain is Periplasmic. Heme contacts are provided by His122 and Tyr126.

Belongs to the CcmE/CycJ family.

It localises to the cell inner membrane. Its function is as follows. Heme chaperone required for the biogenesis of c-type cytochromes. Transiently binds heme delivered by CcmC and transfers the heme to apo-cytochromes in a process facilitated by CcmF and CcmH. The chain is Cytochrome c-type biogenesis protein CcmE from Mesorhizobium japonicum (strain LMG 29417 / CECT 9101 / MAFF 303099) (Mesorhizobium loti (strain MAFF 303099)).